The primary structure comprises 757 residues: Probable inorganic carbon transporter subunit DabA (757 aa).

Positions 321, 323, 475, and 490 each coordinate Zn(2+).

It belongs to the inorganic carbon transporter (TC 9.A.2) DabA family. As to quaternary structure, forms a complex with DabB. Requires Zn(2+) as cofactor.

The protein localises to the cell inner membrane. Functionally, part of an energy-coupled inorganic carbon pump. In Idiomarina loihiensis (strain ATCC BAA-735 / DSM 15497 / L2-TR), this protein is Probable inorganic carbon transporter subunit DabA.